A 256-amino-acid polypeptide reads, in one-letter code: 5-keto-4-deoxy-D-glucarate aldolase (256 aa).

The active-site Proton acceptor is histidine 50. Substrate is bound at residue glutamine 151. Glutamate 153 contacts Mg(2+). Serine 178 and aspartate 179 together coordinate substrate. Residue aspartate 179 coordinates Mg(2+).

This sequence belongs to the HpcH/HpaI aldolase family. KDGluc aldolase subfamily. In terms of assembly, homohexamer; trimer of dimers. The cofactor is Mg(2+).

The catalysed reaction is 5-dehydro-4-deoxy-D-glucarate = 2-hydroxy-3-oxopropanoate + pyruvate. It carries out the reaction 2-dehydro-3-deoxy-D-glucarate = 2-hydroxy-3-oxopropanoate + pyruvate. The protein operates within carbohydrate acid metabolism; galactarate degradation; D-glycerate from galactarate: step 2/3. Functionally, catalyzes the reversible retro-aldol cleavage of both 5-keto-4-deoxy-D-glucarate and 2-keto-3-deoxy-D-glucarate to pyruvate and tartronic semialdehyde. The sequence is that of 5-keto-4-deoxy-D-glucarate aldolase from Enterobacter sp. (strain 638).